A 437-amino-acid chain; its full sequence is Probable carboxypeptidase HCBG_00059 (437 aa).

A signal peptide spans 1 to 20 (MKLSNLAALLSASTVAPVAA). A glycan (N-linked (GlcNAc...) asparagine) is linked at N153. D163 is a binding site for Zn(2+). The Proton acceptor role is filled by E195. Zn(2+) is bound at residue E196. N346 is a glycosylation site (N-linked (GlcNAc...) asparagine).

Belongs to the peptidase M20A family. Requires Zn(2+) as cofactor.

Its subcellular location is the secreted. The polypeptide is Probable carboxypeptidase HCBG_00059 (Ajellomyces capsulatus (strain G186AR / H82 / ATCC MYA-2454 / RMSCC 2432) (Darling's disease fungus)).